We begin with the raw amino-acid sequence, 853 residues long: Dynein axonemal assembly factor 5 (853 aa).

Ala2 carries the post-translational modification N-acetylalanine. 9 HEAT repeats span residues 69-107 (GPWARLLLPRLLRLLSDPAEGCRALAAHLLDLGLRRAAR), 200-238 (HMQSESLIGPLMQTISHQHWKVRVAVIEATGTVIQFGSG), 240-276 (SVDDVLSHFAQRLFDDVPQVRQAVTSVVGGWLLNLRD), 278-316 (YSFLHKLTPLLLSSFSDEMPEIRQTATSLWEKVGLQWQQ), 374-412 (RVKAAQLLPVLLLHAEDHITQHLEIVLRTLHQACTDEEK), 597-636 (GEALQHVIPTLRACLQPSTDPHMRLKLFSILSMMLLRPKD), 694-732 (QEAQETLMPQVLATLEDDSQTTRLMSCRIINMFLKNSGD), 736-774 (PEKFLKVYPELLKRLDDVSNDVRMAAASALLTWLKCIES), and 782-820 (QSSVQFLYRELLVHLDDPESAIQDTVLEVLKEGSVLFPD).

Belongs to the DNAAF5 family. Interacts with DNAI2; probably involved in outer arm dynein assembly. Expressed in ciliated cells including ependymal cells lining the lateral ventricles and multiciliated epithelium of oviduct ampulla.

Its subcellular location is the cytoplasm. It is found in the cytoplasmic granule. Cytoplasmic protein involved in the delivery of the dynein machinery to the motile cilium. It is required for the assembly of the axonemal dynein inner and outer arms, two structures attached to the peripheral outer doublet A microtubule of the axoneme, that play a crucial role in cilium motility. This Mus musculus (Mouse) protein is Dynein axonemal assembly factor 5.